A 409-amino-acid chain; its full sequence is Putative competence-damage inducible protein (409 aa).

The protein belongs to the CinA family.

In Clostridium botulinum (strain Kyoto / Type A2), this protein is Putative competence-damage inducible protein.